Consider the following 258-residue polypeptide: Putative L-lactate dehydrogenase operon regulatory protein (258 aa).

In terms of domain architecture, HTH gntR-type spans 6-74 (RRLSDEVADR…RGGGTFIRWR (69 aa)). Residues 34 to 53 (ERQLAMQLGVSRNSLREALA) constitute a DNA-binding region (H-T-H motif).

In terms of biological role, may be a regulatory protein for the LCT genes. This Escherichia coli (strain K12) protein is Putative L-lactate dehydrogenase operon regulatory protein (lldR).